Consider the following 502-residue polypeptide: Lysine--tRNA ligase (502 aa).

2 residues coordinate Mg(2+): E410 and E417.

It belongs to the class-II aminoacyl-tRNA synthetase family. As to quaternary structure, homodimer. Requires Mg(2+) as cofactor.

Its subcellular location is the cytoplasm. The enzyme catalyses tRNA(Lys) + L-lysine + ATP = L-lysyl-tRNA(Lys) + AMP + diphosphate. The chain is Lysine--tRNA ligase from Photobacterium profundum (strain SS9).